Reading from the N-terminus, the 637-residue chain is Extracellular metalloproteinase 2 (637 aa).

The N-terminal stretch at 1–20 (MRSFLLASLASVATLKSAQA) is a signal peptide. Positions 21 to 244 (HPAHSTRGLS…VHAVVDYSAD (224 aa)) are excised as a propeptide. N-linked (GlcNAc...) asparagine glycosylation is found at N302, N328, N337, and N413. H430 contributes to the Zn(2+) binding site. E431 is a catalytic residue. Zn(2+) is bound at residue H434.

This sequence belongs to the peptidase M36 family. Zn(2+) serves as cofactor.

It localises to the secreted. In terms of biological role, secreted metalloproteinase that allows assimilation of proteinaceous substrates. This Phaeosphaeria nodorum (strain SN15 / ATCC MYA-4574 / FGSC 10173) (Glume blotch fungus) protein is Extracellular metalloproteinase 2 (MEP2).